The following is a 509-amino-acid chain: MNGAVLIADVVATSAAITATRSRKAKVAAIADLLARADPRRSGADELETVTAYVGGALRQRRTGLGWRGLTKLPAPAPGPTLSVLEVHEAFERIAAPAGAGSQAARAAAVADLFGRATAEEQQWLRGVVTGEVRQGALDSLVQEGLAAAAGVPLPEVRRAAMLAGSTVAVAAAAFEGVAALGAVGLQVGRPVLPMLASSAPDLAAALARAGGDEVAVDTKLDGIRIQVHRSGPDVVVATRSLEDITARLPEVVEVARALPADSFVLDGEALALAEDGRPRPFQETAARTAMGAGVEVTPYFFDVLHLDGADLLDVSAAERAAVLERLVPAEHRVPRVVTADLGVAEEFLAGALRSGHEGVVVKSLAAPYEAGRRGASWVKVKPVHTLDLVVLAVEWGSGRRQGWLSNIHLGARDPATGGLVMLGKTFKGMTDEVLAWQTERFLELETSRSAHVVHVRPEQVVEIAFDGVQRSTRYPGGVALRFARVLRYRDDKPVAEIDTVDTVRSFLG.

Residue Asp-218 coordinates ATP. Catalysis depends on Lys-220, which acts as the N6-AMP-lysine intermediate. The ATP site is built by Arg-225, Arg-240, Glu-269, Phe-302, Arg-374, and Lys-380.

This sequence belongs to the ATP-dependent DNA ligase family. Requires Mg(2+) as cofactor.

The catalysed reaction is ATP + (deoxyribonucleotide)n-3'-hydroxyl + 5'-phospho-(deoxyribonucleotide)m = (deoxyribonucleotide)n+m + AMP + diphosphate.. DNA ligase that seals nicks in double-stranded DNA during DNA replication, DNA recombination and DNA repair. This chain is Probable DNA ligase, found in Nocardioides sp. (strain ATCC BAA-499 / JS614).